The sequence spans 152 residues: Small ribosomal subunit protein uS13 (152 aa).

An N-acetylserine modification is found at S2. A Glycyl lysine isopeptide (Lys-Gly) (interchain with G-Cter in SUMO2) cross-link involves residue K91. N6-acetyllysine; alternate is present on residues K94 and K106. Residues K94 and K106 each participate in a glycyl lysine isopeptide (Lys-Gly) (interchain with G-Cter in SUMO2); alternate cross-link.

It belongs to the universal ribosomal protein uS13 family. As to quaternary structure, component of the small ribosomal subunit.

The protein resides in the cytoplasm. Functionally, component of the small ribosomal subunit. The ribosome is a large ribonucleoprotein complex responsible for the synthesis of proteins in the cell. This Homo sapiens (Human) protein is Small ribosomal subunit protein uS13 (RPS18).